Here is a 166-residue protein sequence, read N- to C-terminus: ATP synthase subunit b (166 aa).

The chain crosses the membrane as a helical span at residues 27-47; the sequence is FFVVLLIFLIVLGVIAKWVVP. Residues 124 to 143 are disordered; sequence SADQQLSQQGSAAQSELQSS.

Belongs to the ATPase B chain family. In terms of assembly, F-type ATPases have 2 components, F(1) - the catalytic core - and F(0) - the membrane proton channel. F(1) has five subunits: alpha(3), beta(3), gamma(1), delta(1), epsilon(1). F(0) has three main subunits: a(1), b(2) and c(10-14). The alpha and beta chains form an alternating ring which encloses part of the gamma chain. F(1) is attached to F(0) by a central stalk formed by the gamma and epsilon chains, while a peripheral stalk is formed by the delta and b chains.

Its subcellular location is the cell membrane. Functionally, f(1)F(0) ATP synthase produces ATP from ADP in the presence of a proton or sodium gradient. F-type ATPases consist of two structural domains, F(1) containing the extramembraneous catalytic core and F(0) containing the membrane proton channel, linked together by a central stalk and a peripheral stalk. During catalysis, ATP synthesis in the catalytic domain of F(1) is coupled via a rotary mechanism of the central stalk subunits to proton translocation. In terms of biological role, component of the F(0) channel, it forms part of the peripheral stalk, linking F(1) to F(0). The polypeptide is ATP synthase subunit b (Mycolicibacterium vanbaalenii (strain DSM 7251 / JCM 13017 / BCRC 16820 / KCTC 9966 / NRRL B-24157 / PYR-1) (Mycobacterium vanbaalenii)).